Consider the following 336-residue polypeptide: tRNA N6-adenosine threonylcarbamoyltransferase (336 aa).

His-114 and His-118 together coordinate Fe cation. Residues 136 to 140, Asp-169, Gly-182, Asp-186, and Asn-275 contribute to the substrate site; that span reads LVSGG. A Fe cation-binding site is contributed by Asp-301.

It belongs to the KAE1 / TsaD family. Fe(2+) serves as cofactor.

The protein localises to the cytoplasm. The enzyme catalyses L-threonylcarbamoyladenylate + adenosine(37) in tRNA = N(6)-L-threonylcarbamoyladenosine(37) in tRNA + AMP + H(+). Its function is as follows. Required for the formation of a threonylcarbamoyl group on adenosine at position 37 (t(6)A37) in tRNAs that read codons beginning with adenine. Is involved in the transfer of the threonylcarbamoyl moiety of threonylcarbamoyl-AMP (TC-AMP) to the N6 group of A37, together with TsaE and TsaB. TsaD likely plays a direct catalytic role in this reaction. The protein is tRNA N6-adenosine threonylcarbamoyltransferase of Streptococcus pneumoniae serotype 19F (strain G54).